The following is a 280-amino-acid chain: 2-dehydro-3-deoxyphosphooctonate aldolase (280 aa).

It belongs to the KdsA family.

It is found in the cytoplasm. It catalyses the reaction D-arabinose 5-phosphate + phosphoenolpyruvate + H2O = 3-deoxy-alpha-D-manno-2-octulosonate-8-phosphate + phosphate. The protein operates within carbohydrate biosynthesis; 3-deoxy-D-manno-octulosonate biosynthesis; 3-deoxy-D-manno-octulosonate from D-ribulose 5-phosphate: step 2/3. It participates in bacterial outer membrane biogenesis; lipopolysaccharide biosynthesis. This Neisseria meningitidis serogroup B (strain ATCC BAA-335 / MC58) protein is 2-dehydro-3-deoxyphosphooctonate aldolase.